The following is a 95-amino-acid chain: Small ribosomal subunit protein uS17 (95 aa).

It belongs to the universal ribosomal protein uS17 family. As to quaternary structure, part of the 30S ribosomal subunit.

In terms of biological role, one of the primary rRNA binding proteins, it binds specifically to the 5'-end of 16S ribosomal RNA. The protein is Small ribosomal subunit protein uS17 of Synechococcus sp. (strain CC9902).